The sequence spans 217 residues: Small ribosomal subunit protein uS3 (217 aa).

In terms of domain architecture, KH type-2 spans 38–106; that stretch reads IRKFIQKELA…QVHINIIEIK (69 aa).

This sequence belongs to the universal ribosomal protein uS3 family. As to quaternary structure, part of the 30S ribosomal subunit. Forms a tight complex with proteins S10 and S14.

Functionally, binds the lower part of the 30S subunit head. Binds mRNA in the 70S ribosome, positioning it for translation. This Streptococcus uberis (strain ATCC BAA-854 / 0140J) protein is Small ribosomal subunit protein uS3.